Consider the following 255-residue polypeptide: Hydroxyacylglutathione hydrolase (255 aa).

7 residues coordinate Zn(2+): histidine 52, histidine 54, aspartate 56, histidine 57, histidine 108, aspartate 130, and histidine 168.

It belongs to the metallo-beta-lactamase superfamily. Glyoxalase II family. As to quaternary structure, monomer. The cofactor is Zn(2+).

The enzyme catalyses an S-(2-hydroxyacyl)glutathione + H2O = a 2-hydroxy carboxylate + glutathione + H(+). It participates in secondary metabolite metabolism; methylglyoxal degradation; (R)-lactate from methylglyoxal: step 2/2. Its function is as follows. Thiolesterase that catalyzes the hydrolysis of S-D-lactoyl-glutathione to form glutathione and D-lactic acid. This chain is Hydroxyacylglutathione hydrolase, found in Albidiferax ferrireducens (strain ATCC BAA-621 / DSM 15236 / T118) (Rhodoferax ferrireducens).